A 207-amino-acid polypeptide reads, in one-letter code: Thymidylate kinase (207 aa).

12–19 (GVDGAGKS) contacts ATP.

This sequence belongs to the thymidylate kinase family.

The catalysed reaction is dTMP + ATP = dTDP + ADP. Functionally, phosphorylation of dTMP to form dTDP in both de novo and salvage pathways of dTTP synthesis. The polypeptide is Thymidylate kinase (Bordetella petrii (strain ATCC BAA-461 / DSM 12804 / CCUG 43448)).